Here is a 240-residue protein sequence, read N- to C-terminus: Sugar fermentation stimulation protein homolog (240 aa).

This sequence belongs to the SfsA family.

In Saccharolobus islandicus (strain L.S.2.15 / Lassen #1) (Sulfolobus islandicus), this protein is Sugar fermentation stimulation protein homolog.